Consider the following 1256-residue polypeptide: Topoisomerase 1-associated factor 1 (1256 aa).

The span at 26 to 38 shows a compositional bias: acidic residues; sequence GFIVSDEENDNLE. 4 disordered regions span residues 26–58, 695–725, 1052–1121, and 1176–1256; these read GFIV…VDEY, SKKK…RTHA, SGAE…EAFF, and SDGV…DEDE. The segment covering 39 to 53 has biased composition (basic and acidic residues); sequence NENRNERDPDSRNQD. A compositionally biased stretch (basic residues) spans 1060-1086; it reads GKARKRGNKSSSTIKKKSLQSRSRRPP. 2 stretches are compositionally biased toward basic and acidic residues: residues 1097–1110 and 1179–1190; these read ELRK…FVHD and VDTHSHQDDKSQ. Residues 1194 to 1204 show a composition bias toward acidic residues; it reads SENEDSSEEVS. Positions 1222-1231 are enriched in low complexity; it reads DNNVSENYVS.

This sequence belongs to the timeless family. Component of the fork protection complex (FPC) consisting of TOF1 and CSM3.

It is found in the nucleus. In terms of biological role, forms a fork protection complex (FPC) with CSM3 and which is required for chromosome segregation during meiosis and DNA damage repair. FPC coordinates leading and lagging strand synthesis and moves with the replication fork. FPC stabilizes replication forks in a configuration that is recognized by replication checkpoint sensors. The sequence is that of Topoisomerase 1-associated factor 1 (TOF1) from Scheffersomyces stipitis (strain ATCC 58785 / CBS 6054 / NBRC 10063 / NRRL Y-11545) (Yeast).